Here is an 88-residue protein sequence, read N- to C-terminus: Small ribosomal subunit protein uS15 (88 aa).

This sequence belongs to the universal ribosomal protein uS15 family. Part of the 30S ribosomal subunit. Forms a bridge to the 50S subunit in the 70S ribosome, contacting the 23S rRNA.

One of the primary rRNA binding proteins, it binds directly to 16S rRNA where it helps nucleate assembly of the platform of the 30S subunit by binding and bridging several RNA helices of the 16S rRNA. In terms of biological role, forms an intersubunit bridge (bridge B4) with the 23S rRNA of the 50S subunit in the ribosome. The chain is Small ribosomal subunit protein uS15 from Francisella tularensis subsp. tularensis (strain FSC 198).